Here is a 127-residue protein sequence, read N- to C-terminus: UPF0738 protein Bsph_1225 (127 aa).

It belongs to the UPF0738 family.

The sequence is that of UPF0738 protein Bsph_1225 from Lysinibacillus sphaericus (strain C3-41).